The sequence spans 334 residues: MFDLVGPRLSADEREFLCHPAAGGLILFSRNYASPDQMLALVSEVRSLRPDMLIAVDHEGGRVQRFREGFTRLPPASAYLEVAGEAGLAAAETAGWLMAAELRAVGVDFSFAPVLDVDSGISTVIGDRAFARTPEEVTAAARAFATGMRRAGMAAVGKHFPGHGGVAGDSHLVLPEDRRELEELLARDLLPFSALIRENLEGIMPAHVLYSRIDARPPCFSPFWLQTILRERMNFDGAIFSDDLSMAGAAVAGDYAARALAALEAGCDMLVVCNTPEATASILEALENRTASPGSTRRLAAMCGRSRIDRDALLASSEWRNAVDRIHSFNDSAQ.

Residues aspartate 57, arginine 65, arginine 128, and 158-159 (KH) each bind substrate. Histidine 171 functions as the Proton donor/acceptor in the catalytic mechanism. Catalysis depends on aspartate 242, which acts as the Nucleophile.

Belongs to the glycosyl hydrolase 3 family. NagZ subfamily.

The protein resides in the cytoplasm. It carries out the reaction Hydrolysis of terminal non-reducing N-acetyl-D-hexosamine residues in N-acetyl-beta-D-hexosaminides.. It functions in the pathway cell wall biogenesis; peptidoglycan recycling. Functionally, plays a role in peptidoglycan recycling by cleaving the terminal beta-1,4-linked N-acetylglucosamine (GlcNAc) from peptide-linked peptidoglycan fragments, giving rise to free GlcNAc, anhydro-N-acetylmuramic acid and anhydro-N-acetylmuramic acid-linked peptides. This is Beta-hexosaminidase from Methylococcus capsulatus (strain ATCC 33009 / NCIMB 11132 / Bath).